Here is a 396-residue protein sequence, read N- to C-terminus: Cell division protein FtsZ 1 (396 aa).

The disordered stretch occupies residues methionine 1–methionine 38. Residues alanine 8 to alanine 19 are compositionally biased toward acidic residues. GTP-binding positions include glycine 61–asparagine 65, glycine 148–glycine 150, glutamate 179, arginine 183, and aspartate 226. The segment at glutamine 358–glutamate 396 is disordered.

The protein belongs to the FtsZ family. Homodimer. Polymerizes to form a dynamic ring structure in a strictly GTP-dependent manner. Interacts directly with several other division proteins.

Its subcellular location is the cytoplasm. In terms of biological role, essential cell division protein that forms a contractile ring structure (Z ring) at the future cell division site. The regulation of the ring assembly controls the timing and the location of cell division. One of the functions of the FtsZ ring is to recruit other cell division proteins to the septum to produce a new cell wall between the dividing cells. Binds GTP and shows GTPase activity. The polypeptide is Cell division protein FtsZ 1 (Halobacterium salinarum (strain ATCC 29341 / DSM 671 / R1)).